The following is a 92-amino-acid chain: MPRSLKKGPFIDLHLLKKVEKAVESGDKKPVKTWSRRSMIIPQMIGLTIAVHNGRQHVPVFVSEEMIGHKLGEFAPTRTYRGHAADKKAKKR.

This sequence belongs to the universal ribosomal protein uS19 family.

In terms of biological role, protein S19 forms a complex with S13 that binds strongly to the 16S ribosomal RNA. The sequence is that of Small ribosomal subunit protein uS19 from Photobacterium profundum (strain SS9).